Here is a 515-residue protein sequence, read N- to C-terminus: 1-pyrroline-5-carboxylate dehydrogenase (515 aa).

Catalysis depends on residues Glu-286 and Cys-320.

The protein belongs to the aldehyde dehydrogenase family. RocA subfamily.

The enzyme catalyses L-glutamate 5-semialdehyde + NAD(+) + H2O = L-glutamate + NADH + 2 H(+). It functions in the pathway amino-acid degradation; L-proline degradation into L-glutamate; L-glutamate from L-proline: step 2/2. The sequence is that of 1-pyrroline-5-carboxylate dehydrogenase from Bacillus pumilus (strain SAFR-032).